The following is a 180-amino-acid chain: Probable chorismate pyruvate-lyase (180 aa).

3 residues coordinate substrate: Arg-73, Leu-111, and Glu-170.

Belongs to the UbiC family.

It localises to the cytoplasm. The enzyme catalyses chorismate = 4-hydroxybenzoate + pyruvate. Its pathway is cofactor biosynthesis; ubiquinone biosynthesis. Functionally, removes the pyruvyl group from chorismate, with concomitant aromatization of the ring, to provide 4-hydroxybenzoate (4HB) for the ubiquinone pathway. The polypeptide is Probable chorismate pyruvate-lyase (Nitrosospira multiformis (strain ATCC 25196 / NCIMB 11849 / C 71)).